The primary structure comprises 359 residues: Histidinol-phosphate aminotransferase 1 (359 aa).

Position 216 is an N6-(pyridoxal phosphate)lysine (Lys-216).

Belongs to the class-II pyridoxal-phosphate-dependent aminotransferase family. Histidinol-phosphate aminotransferase subfamily. Homodimer. Pyridoxal 5'-phosphate is required as a cofactor.

The catalysed reaction is L-histidinol phosphate + 2-oxoglutarate = 3-(imidazol-4-yl)-2-oxopropyl phosphate + L-glutamate. The protein operates within amino-acid biosynthesis; L-histidine biosynthesis; L-histidine from 5-phospho-alpha-D-ribose 1-diphosphate: step 7/9. The sequence is that of Histidinol-phosphate aminotransferase 1 (hisC1) from Caulobacter vibrioides (strain ATCC 19089 / CIP 103742 / CB 15) (Caulobacter crescentus).